The sequence spans 326 residues: Beta-ketoacyl-[acyl-carrier-protein] synthase III (326 aa).

Catalysis depends on residues C111 and H252. An ACP-binding region spans residues 253 to 257 (QANIR). N282 is an active-site residue.

This sequence belongs to the thiolase-like superfamily. FabH family. In terms of assembly, homodimer.

The protein localises to the plastid. Its subcellular location is the chloroplast. It catalyses the reaction malonyl-[ACP] + acetyl-CoA + H(+) = 3-oxobutanoyl-[ACP] + CO2 + CoA. Its pathway is lipid metabolism; fatty acid biosynthesis. Its function is as follows. Catalyzes the condensation reaction of fatty acid synthesis by the addition to an acyl acceptor of two carbons from malonyl-ACP. Catalyzes the first condensation reaction which initiates fatty acid synthesis and may therefore play a role in governing the total rate of fatty acid production. Possesses both acetoacetyl-ACP synthase and acetyl transacylase activities. Its substrate specificity determines the biosynthesis of branched-chain and/or straight-chain of fatty acids. This chain is Beta-ketoacyl-[acyl-carrier-protein] synthase III, found in Porphyra purpurea (Red seaweed).